The sequence spans 152 residues: uncharacterized protein (152 aa).

The tract at residues 127–152 is disordered; that stretch reads EKEKAERKAEKAKKNKKKSSTKTKKK. The span at 136–152 shows a compositional bias: basic residues; that stretch reads EKAKKNKKKSSTKTKKK.

This sequence belongs to the mimivirus R546 family.

This is an uncharacterized protein from Sputnik virophage.